The chain runs to 226 residues: Putative type II restriction enzyme MjaVIP (226 aa).

The protein belongs to the BsaWI type II restriction endonuclease family.

It carries out the reaction Endonucleolytic cleavage of DNA to give specific double-stranded fragments with terminal 5'-phosphates.. A P subtype restriction enzyme that recognizes the double-stranded sequence 5'-CCGG-3'; the cleavage site is unknown. The protein is Putative type II restriction enzyme MjaVIP (mjaVIRP) of Methanocaldococcus jannaschii (strain ATCC 43067 / DSM 2661 / JAL-1 / JCM 10045 / NBRC 100440) (Methanococcus jannaschii).